Here is a 108-residue protein sequence, read N- to C-terminus: UPF0060 membrane protein BH2744 (108 aa).

4 helical membrane-spanning segments follow: residues 6-26, 31-51, 60-80, and 86-106; these read TLFL…WLWL, PVYL…IATF, VYAA…WWID, and TYDW…LWAP.

This sequence belongs to the UPF0060 family.

The protein resides in the cell membrane. This is UPF0060 membrane protein BH2744 from Halalkalibacterium halodurans (strain ATCC BAA-125 / DSM 18197 / FERM 7344 / JCM 9153 / C-125) (Bacillus halodurans).